We begin with the raw amino-acid sequence, 119 residues long: Large ribosomal subunit protein uL18 (119 aa).

Belongs to the universal ribosomal protein uL18 family. Part of the 50S ribosomal subunit; part of the 5S rRNA/L5/L18/L25 subcomplex. Contacts the 5S and 23S rRNAs.

In terms of biological role, this is one of the proteins that bind and probably mediate the attachment of the 5S RNA into the large ribosomal subunit, where it forms part of the central protuberance. The polypeptide is Large ribosomal subunit protein uL18 (Ruegeria pomeroyi (strain ATCC 700808 / DSM 15171 / DSS-3) (Silicibacter pomeroyi)).